Here is a 468-residue protein sequence, read N- to C-terminus: Plant UBX domain-containing protein 7 (468 aa).

N-acetylmethionine is present on M1. The region spanning 7 to 48 is the UBA-like domain; it reads SGDQQRLVSSFLEIAVGQTAETARQFLQATSWKLEEAIQLFY. Disordered regions lie at residues 138–168 and 299–329; these read KSPGIWEPDEGDSSASASASASASESASAPR and HFASLSKKRPRGSFSLTPHSKPKEDVAKDEE. The span at 150-166 shows a compositional bias: low complexity; sequence SSASASASASASESASA. One can recognise a UIM domain in the interval 328–347; the sequence is EEEEELQRALAASLEDNNMK. The UBX domain maps to 385–466; sequence DRSLQCRVGI…GVANSMISAT (82 aa).

As to quaternary structure, interacts with CDC48A via its UBX domain and with ubiquitin via its N-terminal UBA-like domain. As to expression, expressed broadly in sporophyte and gametophyte cells.

It localises to the nucleus. Acts as a bridge between CDC48A and ubiquitin, suggesting a role in targeted protein degradation. This is Plant UBX domain-containing protein 7 from Arabidopsis thaliana (Mouse-ear cress).